The following is a 76-amino-acid chain: Defensin-like protein 71 (76 aa).

Positions 1 to 22 (MAMTQVFVIFILLATSLCNSNA) are cleaved as a signal peptide. Cystine bridges form between Cys36–Cys74, Cys40–Cys63, Cys49–Cys72, and Cys53–Cys73.

It belongs to the DEFL family.

It localises to the secreted. The sequence is that of Defensin-like protein 71 (LCR84) from Arabidopsis thaliana (Mouse-ear cress).